The chain runs to 396 residues: Acetate kinase (396 aa).

Asparagine 8 contacts Mg(2+). Residue lysine 15 participates in ATP binding. Residue arginine 89 coordinates substrate. Aspartate 146 functions as the Proton donor/acceptor in the catalytic mechanism. ATP-binding positions include 206 to 210 (HIGNG), 283 to 285 (DMR), and 331 to 335 (GIGEN). Residue glutamate 383 coordinates Mg(2+).

This sequence belongs to the acetokinase family. As to quaternary structure, homodimer. Mg(2+) serves as cofactor. Requires Mn(2+) as cofactor.

The protein localises to the cytoplasm. The enzyme catalyses acetate + ATP = acetyl phosphate + ADP. It functions in the pathway metabolic intermediate biosynthesis; acetyl-CoA biosynthesis; acetyl-CoA from acetate: step 1/2. In terms of biological role, catalyzes the formation of acetyl phosphate from acetate and ATP. Can also catalyze the reverse reaction. This Streptococcus gordonii (strain Challis / ATCC 35105 / BCRC 15272 / CH1 / DL1 / V288) protein is Acetate kinase.